Here is a 557-residue protein sequence, read N- to C-terminus: Formate--tetrahydrofolate ligase (557 aa).

67-74 (TPAGEGKS) contacts ATP.

It belongs to the formate--tetrahydrofolate ligase family.

The catalysed reaction is (6S)-5,6,7,8-tetrahydrofolate + formate + ATP = (6R)-10-formyltetrahydrofolate + ADP + phosphate. The protein operates within one-carbon metabolism; tetrahydrofolate interconversion. This Lacticaseibacillus paracasei (strain ATCC 334 / BCRC 17002 / CCUG 31169 / CIP 107868 / KCTC 3260 / NRRL B-441) (Lactobacillus paracasei) protein is Formate--tetrahydrofolate ligase.